A 298-amino-acid chain; its full sequence is Probable endonuclease 4 (298 aa).

Residues histidine 69, histidine 111, glutamate 146, aspartate 180, histidine 183, histidine 215, aspartate 228, histidine 230, and glutamate 260 each coordinate Zn(2+).

It belongs to the AP endonuclease 2 family. Zn(2+) is required as a cofactor.

It catalyses the reaction Endonucleolytic cleavage to 5'-phosphooligonucleotide end-products.. Endonuclease IV plays a role in DNA repair. It cleaves phosphodiester bonds at apurinic or apyrimidinic (AP) sites, generating a 3'-hydroxyl group and a 5'-terminal sugar phosphate. This is Probable endonuclease 4 from Bacillus cereus (strain AH820).